A 248-amino-acid chain; its full sequence is MAKISSASCFRAIFLGALIILCLPHPSTGVPLEELERAIAILRVRGRALFANAIITSDLLFDLLSDESLTLFAPTDSMLFDLDMTHSLPFYVSTLRLHSVPLRLSLSGLRSLPNSSSLPTLLPSHRLLLTKHSSSNDSIFLDGVQLLIPGLFDGQHIAVHGLADLLPLTAPSSPNRLVEDSTALAKSPWFLGSRFSPAPEPYFAFMDLSPAESPSVEEVSPSPSWGEGEEDFIVGDEGGPLDGRNNGF.

The N-terminal stretch at 1 to 29 is a signal peptide; sequence MAKISSASCFRAIFLGALIILCLPHPSTG. One can recognise an FAS1 domain in the interval 35–166; sequence LERAIAILRV…IAVHGLADLL (132 aa). Residues N114 and N136 are each glycosylated (N-linked (GlcNAc...) asparagine). Low complexity predominate over residues 213–226; sequence SPSVEEVSPSPSWG. A disordered region spans residues 213 to 248; the sequence is SPSVEEVSPSPSWGEGEEDFIVGDEGGPLDGRNNGF.

This sequence belongs to the fasciclin-like AGP family.

The protein resides in the secreted. Its function is as follows. May be a cell surface adhesion protein. This chain is Fasciclin-like arabinogalactan protein 19 (FLA19), found in Arabidopsis thaliana (Mouse-ear cress).